The primary structure comprises 406 residues: Cysteine desulfurase (406 aa).

Residue K226 is modified to N6-(pyridoxal phosphate)lysine. C364 serves as the catalytic Cysteine persulfide intermediate.

It belongs to the class-V pyridoxal-phosphate-dependent aminotransferase family. Csd subfamily. As to quaternary structure, homodimer. Interacts with SufE and the SufBCD complex composed of SufB, SufC and SufD. The interaction with SufE is required to mediate the direct transfer of the sulfur atom from the S-sulfanylcysteine. Requires pyridoxal 5'-phosphate as cofactor.

The protein localises to the cytoplasm. The enzyme catalyses (sulfur carrier)-H + L-cysteine = (sulfur carrier)-SH + L-alanine. The catalysed reaction is L-selenocysteine + AH2 = hydrogenselenide + L-alanine + A + H(+). It participates in cofactor biosynthesis; iron-sulfur cluster biosynthesis. Functionally, cysteine desulfurases mobilize the sulfur from L-cysteine to yield L-alanine, an essential step in sulfur metabolism for biosynthesis of a variety of sulfur-containing biomolecules. Component of the suf operon, which is activated and required under specific conditions such as oxidative stress and iron limitation. Acts as a potent selenocysteine lyase in vitro, that mobilizes selenium from L-selenocysteine. Selenocysteine lyase activity is however unsure in vivo. The polypeptide is Cysteine desulfurase (Yersinia pseudotuberculosis serotype O:1b (strain IP 31758)).